The sequence spans 80 residues: CLAVATA3/ESR (CLE)-related protein 4 (80 aa).

Residues 1 to 22 (MASFKLWVCLILLLLEFSVHQC) form the signal peptide. The tract at residues 55-80 (SKDGQTVLGTLDSKRLSPGGPDPRHH) is disordered. A hydroxyproline mark is found at proline 72 and proline 75. An O-linked (Ara...) hydroxyproline glycan is attached at proline 75.

The protein belongs to the CLV3/ESR signal peptide family. Post-translationally, the O-glycosylation (arabinosylation) of the hydroxyproline Pro-75 enhances binding affinity of the CLE4p peptide for its receptor. As to expression, expressed in roots and seedlings.

It is found in the secreted. The protein localises to the extracellular space. Its function is as follows. Extracellular signal peptide that regulates cell fate. This is CLAVATA3/ESR (CLE)-related protein 4 from Arabidopsis thaliana (Mouse-ear cress).